The following is a 262-amino-acid chain: Putative dimethyl sulfoxide reductase iron-sulfur subunit B (262 aa).

4Fe-4S ferredoxin-type domains lie at 4-34 (YGLV…MGQF), 62-93 (LEMT…TRDD), and 94-123 (GIVE…FNWD). [4Fe-4S] cluster contacts are provided by Cys-13, Cys-16, Cys-19, Cys-23, Cys-71, Cys-74, Cys-79, Cys-83, Cys-103, Cys-106, Cys-109, Cys-113, Cys-147, Cys-150, Cys-162, and Cys-166. A disordered region spans residues 209-262 (NGEMSPGRPWKSKKLESELDDDEAAKAARRRSGSVENGYDVTPHVPAETAGGDD).

In terms of assembly, probable multiprotein complex that likely consists of DmsA, DmsB and DmsC. The cofactor is [4Fe-4S] cluster.

It localises to the cell membrane. In terms of biological role, dimethyl sulfoxide (DMSO) reductase catalyzes the reduction of dimethyl sulfoxide (DMSO) to dimethyl sulfide (DMS) during anaerobic respiration; it can also use trimethylamine N-oxide (TMAO) as terminal electron acceptor. Subunit B is proposed to be involved in electron transfer. The chain is Putative dimethyl sulfoxide reductase iron-sulfur subunit B (dmsB) from Halobacterium salinarum (strain ATCC 700922 / JCM 11081 / NRC-1) (Halobacterium halobium).